A 400-amino-acid polypeptide reads, in one-letter code: WD repeat and FYVE domain-containing protein 2 (400 aa).

6 WD repeats span residues 22-61, 66-105, 112-150, 153-192, 197-236, and 240-279; these read GSQE…QYWP, AMPS…NKMT, AHQS…QRLG, RTSA…CTLL, GHTG…GTAI, and GHND…QETP. An FYVE-type zinc finger spans residues 281-352; the sequence is WLDSDSCQKC…VCDSCHEAIT (72 aa). Residues Cys-287, Cys-290, Cys-314, Cys-317, Cys-322, Cys-325, Cys-344, and Cys-347 each contribute to the Zn(2+) site. A WD 7 repeat occupies 364–399; it reads DSKHNIVHVHFDATRGWLLTSGTDKVIKLWDMTPVV.

In terms of assembly, homodimer. Interacts (via WD repeats 1-3) with AKT1, AKT2, PRKCZ and PRKCI. Interacts with VAMP2. Forms a complex with VAMP2 and PRKCZ. Interacts with FOXO1. Forms a complex with AKT1 and FOXO1. As to expression, highly expressed in the brain (at protein level).

The protein localises to the endosome. It is found in the early endosome. The protein resides in the cytoplasm. Functionally, acts in an adapter protein-like fashion to mediate the interaction between the kinase PRKCZ and its substrate VAMP2 and increases the PRKCZ-dependent phosphorylation of VAMP2. Positively regulates adipocyte differentiation, by facilitating the phosphorylation and thus inactivation of the anti-adipogenetic transcription factor FOXO1 by the kinase AKT1. Plays a role in endosomal control of AKT2 signaling; required for insulin-stimulated AKT2 phosphorylation and glucose uptake and insulin-stimulated phosphorylation of AKT2 substrates. Participates in transferrin receptor endocytosis. This is WD repeat and FYVE domain-containing protein 2 (Wdfy2) from Mus musculus (Mouse).